The following is a 504-amino-acid chain: AMP phosphorylase (504 aa).

Residues G169, 195–200 (SRAITS), and T204 each bind AMP. D257 serves as the catalytic Proton donor. S265 and K289 together coordinate AMP.

The protein belongs to the thymidine/pyrimidine-nucleoside phosphorylase family. Type 2 subfamily.

The enzyme catalyses AMP + phosphate = alpha-D-ribose 1,5-bisphosphate + adenine. It carries out the reaction CMP + phosphate = cytosine + alpha-D-ribose 1,5-bisphosphate. It catalyses the reaction UMP + phosphate = alpha-D-ribose 1,5-bisphosphate + uracil. Functionally, catalyzes the conversion of AMP and phosphate to adenine and ribose 1,5-bisphosphate (R15P). Exhibits phosphorylase activity toward CMP and UMP in addition to AMP. Functions in an archaeal AMP degradation pathway, together with R15P isomerase and RubisCO. The polypeptide is AMP phosphorylase (Methanococcus aeolicus (strain ATCC BAA-1280 / DSM 17508 / OCM 812 / Nankai-3)).